Reading from the N-terminus, the 596-residue chain is MKHIRNFSIIAHIDHGKSTLSDRLIQVCGGLSDREMAAQVLDSMDLERERGITIKAQSVTLDYHAKDGNTYQLNFIDTPGHVDFSYEVSRSLAACEGALLVVDAGQGVEAQTLANCYTALEMNLDVVPVLNKIDLPQAEPERVALEIEDIVGIEAINAVRCSAKTGIGVEDVLEEIVAKIPPPVGDETAPLQALIIDSWFDAYLGVVSLVRIKHGVLKKGEKFKVMSTGQNYNADRVGIFTPKEKDKLELRAGEVGYVISGIKEIHGAPVGDTLTHAKHGADKPLPGFKKVKPQVYAGVFPISTDEYENFRDALNKLSLNDASLFFEPETSSALGFGFRIGYLGLLHMEIVQERLEREYNLDLITTAPTVVYEVVMTNGDIVYVDNPSDLPALNNIDEIHEPIVEANILVPKEYLGNVITLCIEKRGSQTNMVYHGNQVAVTYHLPMAEVVMDFFDRLKSTSRGYASLEYNFIRFDPADMVRLDILINGDRVDALAMIIHRSNIRHRGLALVEKMKELIPRQMFDIAIQAAVGSQIIARSTIKALRKDVTAKCYGGDVSRKKKLLNKQKEGKKRMKQVGNVEVPQEAFLAVLKLND.

Residues 2 to 184 (KHIRNFSIIA…EIVAKIPPPV (183 aa)) form the tr-type G domain. Residues 14-19 (DHGKST) and 131-134 (NKID) each bind GTP.

The protein belongs to the TRAFAC class translation factor GTPase superfamily. Classic translation factor GTPase family. LepA subfamily.

The protein resides in the cell inner membrane. The catalysed reaction is GTP + H2O = GDP + phosphate + H(+). Required for accurate and efficient protein synthesis under certain stress conditions. May act as a fidelity factor of the translation reaction, by catalyzing a one-codon backward translocation of tRNAs on improperly translocated ribosomes. Back-translocation proceeds from a post-translocation (POST) complex to a pre-translocation (PRE) complex, thus giving elongation factor G a second chance to translocate the tRNAs correctly. Binds to ribosomes in a GTP-dependent manner. In Shewanella denitrificans (strain OS217 / ATCC BAA-1090 / DSM 15013), this protein is Elongation factor 4.